The chain runs to 514 residues: 2-isopropylmalate synthase (514 aa).

The region spanning 5 to 267 is the Pyruvate carboxyltransferase domain; sequence VIIFDTTLRD…ETNIKHEEIH (263 aa). Mn(2+) contacts are provided by Asp14, His202, His204, and Asn238. Residues 392-514 form a regulatory domain region; it reads KLNYLSVQSG…AEIKERIATV (123 aa).

Belongs to the alpha-IPM synthase/homocitrate synthase family. LeuA type 1 subfamily. Homodimer. Mn(2+) is required as a cofactor.

It is found in the cytoplasm. It catalyses the reaction 3-methyl-2-oxobutanoate + acetyl-CoA + H2O = (2S)-2-isopropylmalate + CoA + H(+). Its pathway is amino-acid biosynthesis; L-leucine biosynthesis; L-leucine from 3-methyl-2-oxobutanoate: step 1/4. In terms of biological role, catalyzes the condensation of the acetyl group of acetyl-CoA with 3-methyl-2-oxobutanoate (2-ketoisovalerate) to form 3-carboxy-3-hydroxy-4-methylpentanoate (2-isopropylmalate). The polypeptide is 2-isopropylmalate synthase (Photobacterium profundum (strain SS9)).